A 527-amino-acid chain; its full sequence is Putative zinc finger CCCH domain-containing protein 64 (527 aa).

Residues 103–127 (GQLRSTQTTSKRKAASRKGQREQRV) form a disordered region. The C3H1-type zinc finger occupies 213-241 (RPGEPFCRYYMKFGECKHMTFCKYNHPKD).

The sequence is that of Putative zinc finger CCCH domain-containing protein 64 from Oryza sativa subsp. japonica (Rice).